The primary structure comprises 711 residues: Polyribonucleotide nucleotidyltransferase (711 aa).

The Mg(2+) site is built by Asp486 and Asp492. The KH domain occupies 553-612; that stretch reads PRIHTIKISTDKIKDVIGKGGSVIRALTEETGTTIEIEDDGTVKIAATDGEKAKYAIRRI. The S1 motif domain occupies 622 to 690; sequence GRIYNSKVTR…RQGRVRLSIK (69 aa). The disordered stretch occupies residues 689-711; that stretch reads IKEATEQSQPAAAPEAPASEQAE. A compositionally biased stretch (low complexity) spans 694–711; it reads EQSQPAAAPEAPASEQAE.

It belongs to the polyribonucleotide nucleotidyltransferase family. As to quaternary structure, component of the RNA degradosome, which is a multiprotein complex involved in RNA processing and mRNA degradation. Mg(2+) is required as a cofactor.

Its subcellular location is the cytoplasm. The catalysed reaction is RNA(n+1) + phosphate = RNA(n) + a ribonucleoside 5'-diphosphate. Its function is as follows. Involved in mRNA degradation. Catalyzes the phosphorolysis of single-stranded polyribonucleotides processively in the 3'- to 5'-direction. This Salmonella typhi protein is Polyribonucleotide nucleotidyltransferase.